The chain runs to 490 residues: Cytochrome P450 71A21 (490 aa).

A helical transmembrane segment spans residues 1 to 21 (MESMTMIILQSLIIFITILFF). Heme is bound at residue cysteine 432.

It belongs to the cytochrome P450 family. The cofactor is heme.

The protein localises to the membrane. The polypeptide is Cytochrome P450 71A21 (CYP71A21) (Arabidopsis thaliana (Mouse-ear cress)).